Consider the following 137-residue polypeptide: Probable 4-amino-4-deoxy-L-arabinose-phosphoundecaprenol flippase subunit ArnF (137 aa).

The Cytoplasmic portion of the chain corresponds to 1 to 3 (MNA). A helical transmembrane segment spans residues 4–24 (LRGWLAALGSVLLASAAQLGM). Topologically, residues 25–44 (RWGMSRLPLPEAWAGQTPER) are periplasmic. A helical transmembrane segment spans residues 45–65 (AALLAVALAVAAYAASLLCWL). The Cytoplasmic segment spans residues 66–76 (AALRHLPLGRA). A helical membrane pass occupies residues 77–97 (YSLLSASYALVYLLAASLPAF). The Periplasmic segment spans residues 98–100 (DET). Residues 101-121 (FSTSKTLGVGLVVLGVLTVNA) form a helical membrane-spanning segment. Over 122 to 137 (RRTAAAPAHHPSRKAP) the chain is Cytoplasmic.

Belongs to the ArnF family. As to quaternary structure, heterodimer of ArnE and ArnF.

Its subcellular location is the cell inner membrane. It participates in bacterial outer membrane biogenesis; lipopolysaccharide biosynthesis. Translocates 4-amino-4-deoxy-L-arabinose-phosphoundecaprenol (alpha-L-Ara4N-phosphoundecaprenol) from the cytoplasmic to the periplasmic side of the inner membrane. This is Probable 4-amino-4-deoxy-L-arabinose-phosphoundecaprenol flippase subunit ArnF from Pseudomonas aeruginosa (strain ATCC 15692 / DSM 22644 / CIP 104116 / JCM 14847 / LMG 12228 / 1C / PRS 101 / PAO1).